Here is a 297-residue protein sequence, read N- to C-terminus: Beta-glucoside kinase (297 aa).

5–11 (AFDIGGT) is a binding site for ATP.

Belongs to the ROK (NagC/XylR) family. In terms of assembly, homotetramer.

It catalyses the reaction D-cellobiose + ATP = 6-phospho-beta-D-glucosyl-(1-&gt;4)-D-glucose + ADP + H(+). Is inhibited by N-ethylmaleimide in vitro, but ATP affords considerable protection against the inhibitor. Functionally, catalyzes the ATP-dependent phosphorylation of a wide variety of beta-D-glucosides, to produce 6-phospho-beta-D-glucosides including cellobiose-6'-P, gentiobiose-6'-P, cellobiitol-6-P, salicin-6-P, and arbutin-6-P. Is not able to phosphorylate alpha-D-glucosides. May have a dual role of kinase and transcriptional regulator of the cellobiose-PTS operon. The chain is Beta-glucoside kinase (bglK) from Klebsiella pneumoniae.